Here is a 613-residue protein sequence, read N- to C-terminus: MSHPSWLPPKSTGEPLGHVPARMETTHSFGNPSISVSTQQPPKKYAPVVAPKPKYNPYKQPGGEGDLLPPPPPPLEDPGTIPPGPGHFPPPPPLDEGAFKVQQGNPGGKTLEERRSSLDAEIDSLTSILADLECSSPYKPRPPQGSASSIASPPVSTPVTGHKRMVIPQQPPLTATKKSATKPQPAPQAAPIPVTPIGTLKPQPQPVPASYTTASTSSRPTFNVQVKSAQPSPHYMAGPSSGQIYGPGPRGYNNQPVPVSGQCPPPPTCVGTDYAYIPPSGHPPESGYGYTSNQGRYYEPYYAAGPSYGGRSEGDTAYGQQVQPNTWKREAAYAPPASGNQNHPGMYPVSGPKKTYITDPVSAPCAPPLQPKGGYPGPMGPPSIPPSFRPEDELEHLTKKMLYDMENPPADDYFGRCARCGENVVGEGTGCTAMDQVFHVDCFTCIVCDVKLRGQPFYAVEKKAYCEPCYINTLEQCSVCSKPIMERILRATGKAYHPHCFTCVMCHRSLDGIPFTVDACGLIHCIEDFHKKFAPRCSVCKEPIMPAPGQEETVRIVALDRDFHVHCYRCEDCGGLLSEGDNQGCYPLDGHILCKTCNSARIRVLTAKASTDL.

Disordered stretches follow at residues 1 to 119 (MSHP…SSLD) and 133 to 259 (ECSS…PVPV). The span at 26–40 (THSFGNPSISVSTQQ) shows a compositional bias: polar residues. Over residues 41–55 (PPKKYAPVVAPKPKY) the composition is skewed to low complexity. A compositionally biased stretch (pro residues) spans 68-94 (LPPPPPPLEDPGTIPPGPGHFPPPPPL). Lysine 109 is subject to N6-acetyllysine. A phosphoserine mark is found at serine 117 and serine 152. Residues 174–183 (TATKKSATKP) are compositionally biased toward low complexity. Residues 184-194 (QPAPQAAPIPV) show a composition bias toward pro residues. Over residues 210-231 (SYTTASTSSRPTFNVQVKSAQP) the composition is skewed to polar residues. Tyrosine 245 is subject to Phosphotyrosine. Residue arginine 250 is modified to Omega-N-methylarginine. Position 302 is a phosphotyrosine (tyrosine 302). A Glycyl lysine isopeptide (Lys-Gly) (interchain with G-Cter in SUMO1) cross-link involves residue lysine 328. LIM zinc-binding domains are found at residues 415–474 (GRCA…INTL), 475–535 (EQCS…KFAP), and 536–604 (RCSV…RIRV).

Belongs to the zyxin/ajuba family. Interacts with VASP, with PDZ domains of SCRIB and with ACTN1/alpha-actinin.

The protein resides in the nucleus. It is found in the cytoplasm. It localises to the cell junction. Its function is as follows. May play a structural role at sites of cell adhesion in maintaining cell shape and motility. In addition to these structural functions, it may also be implicated in signaling events and activation of gene transcription. May be involved in signal transduction from cell adhesion sites to the nucleus allowing successful integration of signals arising from soluble factors and cell-cell adhesion sites. Also suggested to serve as a scaffold protein upon which distinct protein complexes are assembled in the cytoplasm and in the nucleus. The protein is Lipoma-preferred partner homolog (Lpp) of Mus musculus (Mouse).